The following is a 792-amino-acid chain: uncharacterized protein (792 aa).

361-362 (WD) serves as a coordination point for substrate. The active-site Proton donor is Glu488. Residue 590 to 591 (KQ) participates in substrate binding. Residues 753-792 (DSPSTIAVRDRKPLLPPPSQPPGREPVSRRHKSLIISAAR) are disordered. Residues 766 to 776 (LLPPPSQPPGR) are compositionally biased toward pro residues.

This sequence belongs to the glycosyl hydrolase 65 family.

This is an uncharacterized protein from Mycobacterium leprae (strain TN).